Reading from the N-terminus, the 546-residue chain is T-complex protein 1 subunit epsilon (546 aa).

It belongs to the TCP-1 chaperonin family. In terms of assembly, heterooligomeric complex of about 850 to 900 kDa that forms two stacked rings, 12 to 16 nm in diameter.

It localises to the cytoplasm. Its function is as follows. Molecular chaperone; assists the folding of proteins upon ATP hydrolysis. Known to play a role, in vitro, in the folding of actin and tubulin. In Schizosaccharomyces pombe (strain 972 / ATCC 24843) (Fission yeast), this protein is T-complex protein 1 subunit epsilon (cct5).